Here is an 856-residue protein sequence, read N- to C-terminus: MGEARRDSSSSLQHKKPPWLKLDIPAVVPPAAEEPSFLQPLRRQAFLRSVSMPAEPARVPSPHQEPRRPVLQRQMSITQTIRRGTADWFGVSKDSDSTQKWQRKSIRHCSQRYGKLKPQVIRELDLPSQDNVSLTSTETPPPLYVGPCQLGMQKIVDPLARGRAFRLADDAADGPSAPHTPVTPGAASLCSFSSSRSGFNRLPRRRKRESVAKMSFRAAAALVKGRSVRDGTLRRAQRRSFTPASFLEEDTADFPDELDTSFFAREGVLHEELSTYPDEVFESPSEAALKDWERAPEQVDLTGGALDRSELERSHLMLPLERGWRKQKEGGAAAPQPKVRLRQEVVSTAGQRRGQRIAMPVRKLFAREKRPYGLGMVGRLTNRTYRKRIDSYVKRQIEDMDDHRPFFTYWLTFVHSLVTILAVCIYGVAPVGFSQHETVDSVLRNRGVYENVKYVQQENFWIGPSSEALIHLGAKFSPCMRQDPQVHSFIHAAREREKHSACCVRNDRSGCVQTSEEECSSTLAVWVKWPLHPSAPDLAGQKRRYGSVCHQDPRVCDEPSSEDPHEWPDDITKWPICTKSSAGNHTNHPHMDCVITGRPCCIGTKGRCEITSREYCDFMRGYFHEEATLCSQVHCMDDVCGLLPFLNPEVPDQFYRLWLSLFLHAGVLHCLVSVCFQMTVLRDLEKLAGWHRIAIIYLLSGVTGNLASAIFLPYRAEVGPAGSQFGILACLFVELFQSWQILARPWRAFFKLLAVVLFLFTFGLLPWIDNFAHISGFISGLFLSFAFLPYISFGKFDLYRKRCQIIVFQLVFLGLLAGLVVLFYFYPVRCEWCEFLTCIPFTDKFCEKYELDAQLH.

The tract at residues 1-21 (MGEARRDSSSSLQHKKPPWLK) is disordered. The Cytoplasmic segment spans residues 1–412 (MGEARRDSSS…HRPFFTYWLT (412 aa)). 2 positions are modified to phosphoserine: S76 and S176. Phosphothreonine occurs at positions 180 and 183. Position 391 is a phosphoserine (S391). A helical membrane pass occupies residues 413 to 433 (FVHSLVTILAVCIYGVAPVGF). Topologically, residues 434–656 (SQHETVDSVL…NPEVPDQFYR (223 aa)) are lumenal. A glycan (N-linked (GlcNAc...) asparagine) is linked at N584. Residues 657 to 677 (LWLSLFLHAGVLHCLVSVCFQ) form a helical membrane-spanning segment. Topologically, residues 678–692 (MTVLRDLEKLAGWHR) are cytoplasmic. A helical transmembrane segment spans residues 693–713 (IAIIYLLSGVTGNLASAIFLP). Over 714-715 (YR) the chain is Lumenal. A helical membrane pass occupies residues 716-736 (AEVGPAGSQFGILACLFVELF). Residues 737 to 747 (QSWQILARPWR) lie on the Cytoplasmic side of the membrane. The helical transmembrane segment at 748-768 (AFFKLLAVVLFLFTFGLLPWI) threads the bilayer. Over 769-773 (DNFAH) the chain is Lumenal. A helical transmembrane segment spans residues 774–794 (ISGFISGLFLSFAFLPYISFG). The Cytoplasmic segment spans residues 795-804 (KFDLYRKRCQ). The chain crosses the membrane as a helical span at residues 805 to 825 (IIVFQLVFLGLLAGLVVLFYF). Over 826–856 (YPVRCEWCEFLTCIPFTDKFCEKYELDAQLH) the chain is Lumenal.

This sequence belongs to the peptidase S54 family. In terms of assembly, homodimer, or homooligomer. Interacts with TGFA and HBEGF. Interacts with EGF; may retain EGF in the endoplasmic reticulum and regulates its degradation through the endoplasmic reticulum-associated degradation (ERAD). Interacts (via cytoplasmic N-terminus) with FRMD8/iTAP; this interaction leads to mutual protein stabilization. Interacts with ADAM17/TACE.

The protein localises to the endoplasmic reticulum membrane. It localises to the golgi apparatus membrane. Its function is as follows. Regulates ADAM17 protease, a sheddase of the epidermal growth factor (EGF) receptor ligands and TNF, thereby plays a role in sleep, cell survival, proliferation, migration and inflammation. Does not exhibit any protease activity on its own. The sequence is that of Inactive rhomboid protein 1 (RHBDF1) from Bos taurus (Bovine).